The following is a 126-amino-acid chain: Large ribosomal subunit protein bL12 (126 aa).

Belongs to the bacterial ribosomal protein bL12 family. As to quaternary structure, homodimer. Part of the ribosomal stalk of the 50S ribosomal subunit. Forms a multimeric L10(L12)X complex, where L10 forms an elongated spine to which 2 to 4 L12 dimers bind in a sequential fashion. Binds GTP-bound translation factors.

Its function is as follows. Forms part of the ribosomal stalk which helps the ribosome interact with GTP-bound translation factors. Is thus essential for accurate translation. The protein is Large ribosomal subunit protein bL12 of Francisella tularensis subsp. mediasiatica (strain FSC147).